A 158-amino-acid polypeptide reads, in one-letter code: Serglycin (158 aa).

Positions 1–27 are cleaved as a signal peptide; sequence MMQKLLKCSRLVLALALILVLESSVQG. Cys40 and Cys49 are joined by a disulfide. Ser94 and Ser96 each carry an O-linked (Xyl...) (glycosaminoglycan) serine glycan. 9 tandem repeats follow at residues 94-95, 96-97, 98-99, 100-101, 102-103, 104-105, 106-107, 108-109, and 110-111. Positions 94-111 are 9 X 2 AA tandem repeats of [SF]-G; it reads SGSGFGSGSGSGSGSGSG. O-linked (Xyl...) (glycosaminoglycan) serine glycans are attached at residues Ser100, Ser102, Ser104, Ser106, Ser108, and Ser110. The segment at 134–158 is disordered; sequence RSLDRNLPSDSQDLGQHGLEEDFML.

This sequence belongs to the serglycin family. Binds to activated CD44 and to GZMB. Post-translationally, O-glycosylated; contains chondroitin sulfate and heparan sulfate.

It is found in the cytoplasmic granule. Its subcellular location is the cytolytic granule. The protein localises to the secreted. The protein resides in the extracellular space. It localises to the golgi apparatus. In terms of biological role, plays a role in formation of mast cell secretory granules and mediates storage of various compounds in secretory vesicles. Required for storage of some proteases in both connective tissue and mucosal mast cells and for storage of granzyme B in T-lymphocytes. Plays a role in localizing neutrophil elastase in azurophil granules of neutrophils. Mediates processing of MMP2. Plays a role in cytotoxic cell granule-mediated apoptosis by forming a complex with granzyme B which is delivered to cells by perforin to induce apoptosis. Regulates the secretion of TNF-alpha and may also regulate protease secretion. Inhibits bone mineralization. The sequence is that of Serglycin (SRGN) from Homo sapiens (Human).